The sequence spans 310 residues: E3 ubiquitin-protein ligase CSU1 (310 aa).

The segment at 43-67 adopts an RING-type 1; degenerate zinc-finger fold; the sequence is CSLCLKPFIDPMCCHKGHVFCRECI. The stretch at 75–95 forms a coiled coil; sequence KKDIQRRLAAHSSQKKQDKDE. The tract at residues 110–138 is disordered; it reads EFDQQNHSAMPRNSDKNHNEDKNGFHGAN. Residues 122–133 show a composition bias toward basic and acidic residues; the sequence is NSDKNHNEDKNG. The RING-type 2 zinc-finger motif lies at 221–263; it reads CPSCKVTLTNTMSLVALSSCGHVFCKKCAEKFMPVDKVCLVCD.

It belongs to the NOSIP family.

Its subcellular location is the nucleus. It is found in the nucleus speckle. It carries out the reaction S-ubiquitinyl-[E2 ubiquitin-conjugating enzyme]-L-cysteine + [acceptor protein]-L-lysine = [E2 ubiquitin-conjugating enzyme]-L-cysteine + N(6)-ubiquitinyl-[acceptor protein]-L-lysine.. The protein operates within protein modification; protein ubiquitination. RING-finger E3 ubiquitin-protein ligase that plays an major role in maintaining COP1 homeostasis in darkness. Negatively regulates COP1 protein accumulation by targeting COP1 for ubiquitination and subsequent proteasomal degradation in dark-grown seedlings. Negatively regulates the accumulation of SPA1 protein in the dark. This chain is E3 ubiquitin-protein ligase CSU1, found in Arabidopsis thaliana (Mouse-ear cress).